A 428-amino-acid polypeptide reads, in one-letter code: Trigger factor (428 aa).

Residues 163-248 form the PPIase FKBP-type domain; the sequence is GDTAVIDFEG…VHEVKAKQLP (86 aa).

It belongs to the FKBP-type PPIase family. Tig subfamily.

The protein localises to the cytoplasm. The enzyme catalyses [protein]-peptidylproline (omega=180) = [protein]-peptidylproline (omega=0). Involved in protein export. Acts as a chaperone by maintaining the newly synthesized protein in an open conformation. Functions as a peptidyl-prolyl cis-trans isomerase. The sequence is that of Trigger factor from Geobacillus thermodenitrificans (strain NG80-2).